An 878-amino-acid chain; its full sequence is Phosphoenolpyruvate carboxylase (878 aa).

Residues His-137 and Lys-545 contribute to the active site.

The protein belongs to the PEPCase type 1 family. Requires Mg(2+) as cofactor.

It catalyses the reaction oxaloacetate + phosphate = phosphoenolpyruvate + hydrogencarbonate. In terms of biological role, forms oxaloacetate, a four-carbon dicarboxylic acid source for the tricarboxylic acid cycle. The sequence is that of Phosphoenolpyruvate carboxylase from Serratia proteamaculans (strain 568).